Consider the following 82-residue polypeptide: ATP synthase subunit c, chloroplastic (82 aa).

2 helical membrane passes run 3-23 (PIIS…AAIG) and 57-77 (LAFM…LLFA).

The protein belongs to the ATPase C chain family. As to quaternary structure, F-type ATPases have 2 components, F(1) - the catalytic core - and F(0) - the membrane proton channel. F(1) has five subunits: alpha(3), beta(3), gamma(1), delta(1), epsilon(1). F(0) has four main subunits: a(1), b(1), b'(1) and c(10-14). The alpha and beta chains form an alternating ring which encloses part of the gamma chain. F(1) is attached to F(0) by a central stalk formed by the gamma and epsilon chains, while a peripheral stalk is formed by the delta, b and b' chains.

The protein resides in the plastid. The protein localises to the chloroplast thylakoid membrane. In terms of biological role, f(1)F(0) ATP synthase produces ATP from ADP in the presence of a proton or sodium gradient. F-type ATPases consist of two structural domains, F(1) containing the extramembraneous catalytic core and F(0) containing the membrane proton channel, linked together by a central stalk and a peripheral stalk. During catalysis, ATP synthesis in the catalytic domain of F(1) is coupled via a rotary mechanism of the central stalk subunits to proton translocation. Functionally, key component of the F(0) channel; it plays a direct role in translocation across the membrane. A homomeric c-ring of between 10-14 subunits forms the central stalk rotor element with the F(1) delta and epsilon subunits. This Phaeodactylum tricornutum (strain CCAP 1055/1) protein is ATP synthase subunit c, chloroplastic.